The following is a 105-amino-acid chain: Large ribosomal subunit protein uL24 (105 aa).

The protein belongs to the universal ribosomal protein uL24 family. As to quaternary structure, part of the 50S ribosomal subunit.

One of two assembly initiator proteins, it binds directly to the 5'-end of the 23S rRNA, where it nucleates assembly of the 50S subunit. Functionally, one of the proteins that surrounds the polypeptide exit tunnel on the outside of the subunit. The polypeptide is Large ribosomal subunit protein uL24 (Beijerinckia indica subsp. indica (strain ATCC 9039 / DSM 1715 / NCIMB 8712)).